The primary structure comprises 218 residues: Octanoyltransferase (218 aa).

A BPL/LPL catalytic domain is found at Gly-32–Asp-218. Substrate is bound by residues Arg-71–His-78, Ala-151–Gly-153, and Gly-164–Ser-166. Cys-182 serves as the catalytic Acyl-thioester intermediate.

Belongs to the LipB family.

It localises to the cytoplasm. It catalyses the reaction octanoyl-[ACP] + L-lysyl-[protein] = N(6)-octanoyl-L-lysyl-[protein] + holo-[ACP] + H(+). It participates in protein modification; protein lipoylation via endogenous pathway; protein N(6)-(lipoyl)lysine from octanoyl-[acyl-carrier-protein]: step 1/2. In terms of biological role, catalyzes the transfer of endogenously produced octanoic acid from octanoyl-acyl-carrier-protein onto the lipoyl domains of lipoate-dependent enzymes. Lipoyl-ACP can also act as a substrate although octanoyl-ACP is likely to be the physiological substrate. The protein is Octanoyltransferase of Cereibacter sphaeroides (strain ATCC 17025 / ATH 2.4.3) (Rhodobacter sphaeroides).